A 1405-amino-acid chain; its full sequence is DNA-directed RNA polymerase subunit beta' (1405 aa).

Zn(2+) contacts are provided by cysteine 70, cysteine 72, cysteine 85, and cysteine 88. The Mg(2+) site is built by aspartate 460, aspartate 462, and aspartate 464. Cysteine 815, cysteine 890, cysteine 897, and cysteine 900 together coordinate Zn(2+).

Belongs to the RNA polymerase beta' chain family. In terms of assembly, the RNAP catalytic core consists of 2 alpha, 1 beta, 1 beta' and 1 omega subunit. When a sigma factor is associated with the core the holoenzyme is formed, which can initiate transcription. Requires Mg(2+) as cofactor. Zn(2+) is required as a cofactor.

The catalysed reaction is RNA(n) + a ribonucleoside 5'-triphosphate = RNA(n+1) + diphosphate. Its function is as follows. DNA-dependent RNA polymerase catalyzes the transcription of DNA into RNA using the four ribonucleoside triphosphates as substrates. This Xanthomonas campestris pv. campestris (strain B100) protein is DNA-directed RNA polymerase subunit beta'.